Consider the following 335-residue polypeptide: Ornithine carbamoyltransferase (335 aa).

Carbamoyl phosphate is bound by residues 60–63, Gln-87, Arg-111, and 138–141; these read STRT and HPTQ. Residues Asn-171, Asp-235, and 239-240 each bind L-ornithine; that span reads SM. Carbamoyl phosphate-binding positions include 277-278 and Arg-322; that span reads CL.

This sequence belongs to the aspartate/ornithine carbamoyltransferase superfamily. OTCase family.

The protein localises to the cytoplasm. The catalysed reaction is carbamoyl phosphate + L-ornithine = L-citrulline + phosphate + H(+). It functions in the pathway amino-acid biosynthesis; L-arginine biosynthesis; L-arginine from L-ornithine and carbamoyl phosphate: step 1/3. Functionally, reversibly catalyzes the transfer of the carbamoyl group from carbamoyl phosphate (CP) to the N(epsilon) atom of ornithine (ORN) to produce L-citrulline. The sequence is that of Ornithine carbamoyltransferase from Streptomyces avermitilis (strain ATCC 31267 / DSM 46492 / JCM 5070 / NBRC 14893 / NCIMB 12804 / NRRL 8165 / MA-4680).